The chain runs to 355 residues: MYTSLISIKEKYELLAQELTKLEIFNDIKKYTKIQKEHASIEDIAIAFINYLAAESSYNLSKEILQNEKDEELIALAKEDIDEQSTLMQKLEQELKELLLPQDENDNKNVIMEIRGAAGGDEGDIFSGDLFKMYQKFCEANDFKIKIVDSVYGTAGGYSRIVFIVKGEKVFSKLKFERGVHRVQRVPQTETQGRVHTSTATVTVLPEVDDDVKIEIRPEDIEVDVFRSSGAGGQSVNTTDSAVRITHKKTGIIVTSQDERSQIMNRETALKILKAKLYEIEVKKREEEEQGLRKLAGTGDRSEKIRTYNYPQDRITDHRIGFSLSLKNVMEGNLDKIIDALIADEKALKIKAAGF.

Residue Q234 is modified to N5-methylglutamine.

The protein belongs to the prokaryotic/mitochondrial release factor family. Methylated by PrmC. Methylation increases the termination efficiency of RF1.

Its subcellular location is the cytoplasm. In terms of biological role, peptide chain release factor 1 directs the termination of translation in response to the peptide chain termination codons UAG and UAA. The polypeptide is Peptide chain release factor 1 (Metamycoplasma arthritidis (strain 158L3-1) (Mycoplasma arthritidis)).